The chain runs to 239 residues: Sugar fermentation stimulation protein homolog (239 aa).

It belongs to the SfsA family.

In Microcystis aeruginosa (strain NIES-843 / IAM M-2473), this protein is Sugar fermentation stimulation protein homolog.